The chain runs to 440 residues: Transposon Ty1-GR2 Gag polyprotein (440 aa).

The segment covering Met1 to Ser16 has biased composition (low complexity). Disordered regions lie at residues Met1 to Gln93, Pro126 to Pro173, and Gly352 to Tyr440. Polar residues-rich tracts occupy residues Thr48–Ser60 and Gln127–Phe152. The segment covering Thr153 to Thr165 has biased composition (low complexity). Residues Asn299–His401 are RNA-binding. Residues Asn402–Ser418 are compositionally biased toward low complexity. Position 416 is a phosphoserine (Ser416). The segment covering Lys419–Asn428 has biased composition (polar residues). Residues Asn429–Tyr440 show a composition bias toward basic and acidic residues.

As to quaternary structure, homotrimer.

It localises to the cytoplasm. Capsid protein (CA) is the structural component of the virus-like particle (VLP), forming the shell that encapsulates the retrotransposons dimeric RNA genome. The particles are assembled from trimer-clustered units and there are holes in the capsid shells that allow for the diffusion of macromolecules. CA also has nucleocapsid-like chaperone activity, promoting primer tRNA(i)-Met annealing to the multipartite primer-binding site (PBS), dimerization of Ty1 RNA and initiation of reverse transcription. The protein is Transposon Ty1-GR2 Gag polyprotein (TY1A-GR2) of Saccharomyces cerevisiae (strain ATCC 204508 / S288c) (Baker's yeast).